The sequence spans 273 residues: Urease accessory protein UreD (273 aa).

It belongs to the UreD family. In terms of assembly, ureD, UreF and UreG form a complex that acts as a GTP-hydrolysis-dependent molecular chaperone, activating the urease apoprotein by helping to assemble the nickel containing metallocenter of UreC. The UreE protein probably delivers the nickel.

It is found in the cytoplasm. Functionally, required for maturation of urease via the functional incorporation of the urease nickel metallocenter. In Bacillus cereus (strain ATCC 10987 / NRS 248), this protein is Urease accessory protein UreD.